A 325-amino-acid polypeptide reads, in one-letter code: Bifunctional nuclease 2 (325 aa).

A BFN domain is found at 119-254; the sequence is CVHNNSQGRN…SLAYSDGIRS (136 aa). Residues 285–320 enclose the UVR domain; it reads EAQEFGLIRNMLIAAVEERYKDAATWRDKLMLLRSK.

Belongs to the bifunctional nuclease family.

It localises to the nucleus. Its function is as follows. Bifunctional nuclease with both RNase and DNase activities. Involved in basal defense response. Participates in abscisic acid-derived callose deposition following infection by a necrotrophic pathogen. The polypeptide is Bifunctional nuclease 2 (BBD2) (Oryza sativa subsp. japonica (Rice)).